We begin with the raw amino-acid sequence, 253 residues long: Probable transcriptional regulatory protein Hore_12350 (253 aa).

The disordered stretch occupies residues 1 to 21 (MAGHSKWANIKHKKAKEDRKR).

It belongs to the TACO1 family.

The protein resides in the cytoplasm. The sequence is that of Probable transcriptional regulatory protein Hore_12350 from Halothermothrix orenii (strain H 168 / OCM 544 / DSM 9562).